We begin with the raw amino-acid sequence, 141 residues long: ATP synthase epsilon chain (141 aa).

This sequence belongs to the ATPase epsilon chain family. F-type ATPases have 2 components, CF(1) - the catalytic core - and CF(0) - the membrane proton channel. CF(1) has five subunits: alpha(3), beta(3), gamma(1), delta(1), epsilon(1). CF(0) has three main subunits: a, b and c.

It localises to the cell inner membrane. Its function is as follows. Produces ATP from ADP in the presence of a proton gradient across the membrane. The sequence is that of ATP synthase epsilon chain from Burkholderia mallei (strain NCTC 10247).